A 453-amino-acid chain; its full sequence is DNA repair protein RadA (453 aa).

The segment at 10–27 (CQECGYQSPKYLGRCPNC) adopts a C4-type zinc-finger fold. 95 to 102 (GDPGIGKS) is a binding site for ATP. Positions 251–255 (KNRFG) match the RadA KNRFG motif motif. Residues 350–453 (DAYLKSAGGV…VGQVLNAVFS (104 aa)) are lon-protease-like.

The protein belongs to the RecA family. RadA subfamily.

In terms of biological role, DNA-dependent ATPase involved in processing of recombination intermediates, plays a role in repairing DNA breaks. Stimulates the branch migration of RecA-mediated strand transfer reactions, allowing the 3' invading strand to extend heteroduplex DNA faster. Binds ssDNA in the presence of ADP but not other nucleotides, has ATPase activity that is stimulated by ssDNA and various branched DNA structures, but inhibited by SSB. Does not have RecA's homology-searching function. This Streptococcus pyogenes serotype M1 protein is DNA repair protein RadA.